The sequence spans 669 residues: Methionine--tRNA ligase (669 aa).

The 'HIGH' region signature appears at 15-25 (PYANGPAHIGH). Residues cysteine 146, cysteine 149, cysteine 158, and cysteine 162 each coordinate Zn(2+). Residues 328–332 (KFSKS) carry the 'KMSKS' region motif. Lysine 331 contributes to the ATP binding site. The tRNA-binding domain occupies 570 to 669 (QFKALDLRVG…KEVPAGCGIR (100 aa)).

It belongs to the class-I aminoacyl-tRNA synthetase family. MetG type 1 subfamily. As to quaternary structure, homodimer. Requires Zn(2+) as cofactor.

It is found in the cytoplasm. The catalysed reaction is tRNA(Met) + L-methionine + ATP = L-methionyl-tRNA(Met) + AMP + diphosphate. Is required not only for elongation of protein synthesis but also for the initiation of all mRNA translation through initiator tRNA(fMet) aminoacylation. The chain is Methionine--tRNA ligase from Methanothrix thermoacetophila (strain DSM 6194 / JCM 14653 / NBRC 101360 / PT) (Methanosaeta thermophila).